The primary structure comprises 276 residues: uncharacterized protein (276 aa).

Positions 1–19 are cleaved as a signal peptide; it reads MKKWLICSFVLVLLVSFTA. Cysteine 20 carries the N-palmitoyl cysteine lipid modification. Cysteine 20 is lipidated: S-diacylglycerol cysteine.

It belongs to the NlpA lipoprotein family.

The protein localises to the cell membrane. This is an uncharacterized protein from Bacillus subtilis (strain 168).